Reading from the N-terminus, the 445-residue chain is Exodeoxyribonuclease 7 large subunit (445 aa).

It belongs to the XseA family. In terms of assembly, heterooligomer composed of large and small subunits.

The protein localises to the cytoplasm. It catalyses the reaction Exonucleolytic cleavage in either 5'- to 3'- or 3'- to 5'-direction to yield nucleoside 5'-phosphates.. Functionally, bidirectionally degrades single-stranded DNA into large acid-insoluble oligonucleotides, which are then degraded further into small acid-soluble oligonucleotides. The chain is Exodeoxyribonuclease 7 large subunit from Staphylococcus epidermidis (strain ATCC 35984 / DSM 28319 / BCRC 17069 / CCUG 31568 / BM 3577 / RP62A).